Here is a 300-residue protein sequence, read N- to C-terminus: Spermine synthase SPE4 (300 aa).

Ser5 is modified (phosphoserine). Residues 12-255 (DGWFREINDK…GQLGLIVCSN (244 aa)) form the PABS domain. S-adenosyl 3-(methylsulfanyl)propylamine contacts are provided by residues Gln44, Asp99, Glu119, and 151–152 (DG). The active-site Proton acceptor is Asp174. Asp177 is a spermidine binding site.

It belongs to the spermidine/spermine synthase family.

The enzyme catalyses S-adenosyl 3-(methylsulfanyl)propylamine + spermidine = spermine + S-methyl-5'-thioadenosine + H(+). The protein operates within amine and polyamine biosynthesis; spermine biosynthesis; spermine from spermidine: step 1/1. The protein is Spermine synthase SPE4 (SPE4) of Saccharomyces cerevisiae (strain ATCC 204508 / S288c) (Baker's yeast).